A 399-amino-acid polypeptide reads, in one-letter code: Acetylornithine aminotransferase (399 aa).

Pyridoxal 5'-phosphate-binding positions include 99-100 and Phe132; that span reads GA. Arg135 is a binding site for N(2)-acetyl-L-ornithine. 217 to 220 is a binding site for pyridoxal 5'-phosphate; sequence DEVQ. N6-(pyridoxal phosphate)lysine is present on Lys246. Thr274 contacts N(2)-acetyl-L-ornithine. Thr275 is a binding site for pyridoxal 5'-phosphate.

This sequence belongs to the class-III pyridoxal-phosphate-dependent aminotransferase family. ArgD subfamily. In terms of assembly, homodimer. Requires pyridoxal 5'-phosphate as cofactor.

It localises to the cytoplasm. It catalyses the reaction N(2)-acetyl-L-ornithine + 2-oxoglutarate = N-acetyl-L-glutamate 5-semialdehyde + L-glutamate. Its pathway is amino-acid biosynthesis; L-arginine biosynthesis; N(2)-acetyl-L-ornithine from L-glutamate: step 4/4. This is Acetylornithine aminotransferase from Agrobacterium fabrum (strain C58 / ATCC 33970) (Agrobacterium tumefaciens (strain C58)).